The sequence spans 383 residues: Chorismate synthase (383 aa).

2 residues coordinate NADP(+): Arg-39 and Arg-45. FMN is bound by residues Arg-127–Ser-129, Gln-249–Ser-250, Gly-294, Lys-309–Thr-313, and Arg-335.

Belongs to the chorismate synthase family. In terms of assembly, homotetramer. It depends on FMNH2 as a cofactor.

It carries out the reaction 5-O-(1-carboxyvinyl)-3-phosphoshikimate = chorismate + phosphate. Its pathway is metabolic intermediate biosynthesis; chorismate biosynthesis; chorismate from D-erythrose 4-phosphate and phosphoenolpyruvate: step 7/7. In terms of biological role, catalyzes the anti-1,4-elimination of the C-3 phosphate and the C-6 proR hydrogen from 5-enolpyruvylshikimate-3-phosphate (EPSP) to yield chorismate, which is the branch point compound that serves as the starting substrate for the three terminal pathways of aromatic amino acid biosynthesis. This reaction introduces a second double bond into the aromatic ring system. The protein is Chorismate synthase of Caldicellulosiruptor bescii (strain ATCC BAA-1888 / DSM 6725 / KCTC 15123 / Z-1320) (Anaerocellum thermophilum).